Here is a 923-residue protein sequence, read N- to C-terminus: Mitochondrial 10-formyltetrahydrofolate dehydrogenase (923 aa).

The transit peptide at 1 to 19 (MLRRGSQALRRFSTGRVYF) directs the protein to the mitochondrion; not cleaved. Residues 23–331 (LKLALIGQSL…PASQYFSTGE (309 aa)) are hydrolase domain. Ser-31 carries the post-translational modification Phosphoserine. Residue Lys-60 is modified to N6-succinyllysine. Residue 110–112 (QFI) participates in (6R)-10-formyltetrahydrofolate binding. The Proton donor role is filled by His-128. Asp-164 contacts (6R)-10-formyltetrahydrofolate. The Carrier domain occupies 339-416 (AEEVKVAETI…GFIQKVVRKL (78 aa)). O-(pantetheine 4'-phosphoryl)serine is present on Ser-375. An aldehyde dehydrogenase domain region spans residues 438–923 (MVKMPYQCFI…LKTKTVTLEY (486 aa)). NADP(+) is bound by residues 592–594 (IPW) and 618–621 (KPAQ). Residue Ser-650 is modified to Phosphoserine. Residues 651–656 (GGIAGQ) and 671–672 (GS) contribute to the NADP(+) site. Lys-681 carries the N6-succinyllysine modification. The active-site Proton acceptor is the Glu-694. Position 694–695 (694–695 (EL)) interacts with NADP(+). The active-site Proton donor is Cys-728. NADP(+) is bound at residue Lys-778. Residue Lys-788 is modified to N6-succinyllysine. 825 to 827 (ESF) lines the NADP(+) pocket. Lys-903 carries the post-translational modification N6-acetyllysine.

In the N-terminal section; belongs to the GART family. The protein in the C-terminal section; belongs to the aldehyde dehydrogenase family. ALDH1L subfamily. In terms of processing, phosphopantetheinylation at Ser-375 by AASDHPPT is required for the formyltetrahydrofolate dehydrogenase activity. As to expression, highly expressed in pancreas, heart, brain and skeletal muscle.

Its subcellular location is the mitochondrion. It carries out the reaction (6R)-10-formyltetrahydrofolate + NADP(+) + H2O = (6S)-5,6,7,8-tetrahydrofolate + CO2 + NADPH + H(+). Its function is as follows. Mitochondrial 10-formyltetrahydrofolate dehydrogenase that catalyzes the NADP(+)-dependent conversion of 10-formyltetrahydrofolate to tetrahydrofolate and carbon dioxide. This is Mitochondrial 10-formyltetrahydrofolate dehydrogenase from Homo sapiens (Human).